The following is a 252-amino-acid chain: 5-oxoprolinase subunit A (252 aa).

The protein belongs to the LamB/PxpA family. Forms a complex composed of PxpA, PxpB and PxpC.

The enzyme catalyses 5-oxo-L-proline + ATP + 2 H2O = L-glutamate + ADP + phosphate + H(+). Its function is as follows. Catalyzes the cleavage of 5-oxoproline to form L-glutamate coupled to the hydrolysis of ATP to ADP and inorganic phosphate. This Corynebacterium glutamicum (strain R) protein is 5-oxoprolinase subunit A.